The chain runs to 352 residues: Nuclear receptor subfamily 1 group I member 3 (352 aa).

A DNA-binding region (nuclear receptor) is located at residues 8–83; that stretch reads LRNCVVCGDQ…AGMRKDMILS (76 aa). An NR C4-type zinc finger spans residues 11 to 31; that stretch reads CVVCGDQATGYHFNALTCEGC. Thr38 is subject to Phosphothreonine; by PKC. The NR C4-type zinc-finger motif lies at 47 to 71; that stretch reads CPFAGSCEVSKTQRRHCPACRLQKC. Residues 109-352 enclose the NR LBD domain; the sequence is EQEELIRTLL…MMPLLQEICS (244 aa).

This sequence belongs to the nuclear hormone receptor family. NR1 subfamily. Interacts with ECT2. Heterodimer of NR1I3 and RXR. Interacts with PSMC4. Directly interacts with DNAJC7. The DNAJC7-NR1I3 complex may also include HSP90. Interacts with CRY1. Interacts with CRY2 in a ligand-dependent manner. In terms of processing, phosphorylated at Thr-38 by PKC, dephosphorylation of Thr-38 is required for nuclear translocation and activation. Predominantly expressed in liver.

It localises to the nucleus. Its subcellular location is the cytoplasm. The protein localises to the cytoskeleton. Its function is as follows. Binds and transactivates the retinoic acid response elements that control expression of the retinoic acid receptor beta 2 and alcohol dehydrogenase 3 genes. Transactivates both the phenobarbital responsive element module of the human CYP2B6 gene and the CYP3A4 xenobiotic response element. The polypeptide is Nuclear receptor subfamily 1 group I member 3 (NR1I3) (Homo sapiens (Human)).